The chain runs to 481 residues: Ribosomal protein uS12 methylthiotransferase RimO (481 aa).

The MTTase N-terminal domain occupies 38-148; the sequence is NRIGFVSLGC…VLKHVHKYVP (111 aa). Cys47, Cys83, Cys112, Cys180, Cys184, and Cys187 together coordinate [4Fe-4S] cluster. The region spanning 166–403 is the Radical SAM core domain; the sequence is LTPKHYAYLK…MEVQAEISAE (238 aa). Residues 406-472 form the TRAM domain; that stretch reads ARFVGRTMDI…EHDLWAELVD (67 aa).

It belongs to the methylthiotransferase family. RimO subfamily. [4Fe-4S] cluster serves as cofactor.

The protein localises to the cytoplasm. The enzyme catalyses L-aspartate(89)-[ribosomal protein uS12]-hydrogen + (sulfur carrier)-SH + AH2 + 2 S-adenosyl-L-methionine = 3-methylsulfanyl-L-aspartate(89)-[ribosomal protein uS12]-hydrogen + (sulfur carrier)-H + 5'-deoxyadenosine + L-methionine + A + S-adenosyl-L-homocysteine + 2 H(+). Catalyzes the methylthiolation of an aspartic acid residue of ribosomal protein uS12. This Shewanella oneidensis (strain ATCC 700550 / JCM 31522 / CIP 106686 / LMG 19005 / NCIMB 14063 / MR-1) protein is Ribosomal protein uS12 methylthiotransferase RimO.